Here is a 262-residue protein sequence, read N- to C-terminus: Acyl-[acyl-carrier-protein]--UDP-N-acetylglucosamine O-acyltransferase (262 aa).

It belongs to the transferase hexapeptide repeat family. LpxA subfamily. As to quaternary structure, homotrimer.

Its subcellular location is the cytoplasm. It carries out the reaction a (3R)-hydroxyacyl-[ACP] + UDP-N-acetyl-alpha-D-glucosamine = a UDP-3-O-[(3R)-3-hydroxyacyl]-N-acetyl-alpha-D-glucosamine + holo-[ACP]. It participates in glycolipid biosynthesis; lipid IV(A) biosynthesis; lipid IV(A) from (3R)-3-hydroxytetradecanoyl-[acyl-carrier-protein] and UDP-N-acetyl-alpha-D-glucosamine: step 1/6. Involved in the biosynthesis of lipid A, a phosphorylated glycolipid that anchors the lipopolysaccharide to the outer membrane of the cell. In Psychromonas ingrahamii (strain DSM 17664 / CCUG 51855 / 37), this protein is Acyl-[acyl-carrier-protein]--UDP-N-acetylglucosamine O-acyltransferase.